Here is a 462-residue protein sequence, read N- to C-terminus: Gamma-glutamylethanolamide synthetase GlnA4 (462 aa).

The GS beta-grasp domain maps to Gly30–Gly126. Residues Pro133 to Met462 form the GS catalytic domain. Residues Glu156 and Glu158 each contribute to the Mg(2+) site. Glu214 provides a ligand contact to ATP. Mg(2+)-binding residues include Glu219 and Glu226. Residue Gly270 coordinates L-glutamate. Residue His274 participates in Mg(2+) binding. His276–Ser278 lines the ATP pocket. Arg325 and Arg343 together coordinate L-glutamate. Positions 343 and 348 each coordinate ATP. Glu359 serves as a coordination point for Mg(2+). Arg361 is an L-glutamate binding site.

It belongs to the glutamine synthetase family. It depends on Mg(2+) as a cofactor.

It catalyses the reaction ethanolamine + L-glutamate + ATP = gamma-L-glutamylethanolamide + ADP + phosphate + H(+). Its pathway is amine and polyamine degradation; ethanolamine degradation. With respect to regulation, very slightly decreased activity with glutamine synthetase (GS) inhibitor methionine sulfoximine (MSO). In terms of biological role, involved in the catabolism of monoamine ethanolamine. Catalyzes the ATP-dependent gamma-glutamylation of ethanolamine. No activity with polyamines. No complementation of the L-glutamine auxotrophy of an E.coli glnA mutant. Enables survival of S.coelicolor under high local environmental ethanolamine conditions. May play a role during starvation conditions to limit intracellular ethanolamine concentration, which in excess is toxic to the cells. The sequence is that of Gamma-glutamylethanolamide synthetase GlnA4 from Streptomyces coelicolor (strain ATCC BAA-471 / A3(2) / M145).